A 71-amino-acid polypeptide reads, in one-letter code: Phosphatidylinositol N-acetylglucosaminyltransferase subunit Y (71 aa).

M1 is a topological domain (cytoplasmic). A helical membrane pass occupies residues 2–21; sequence FFSLPVLTVLIPLVSLTGLL. Over 22-44 the chain is Lumenal; the sequence is YSASVEEDFPNGCTSTASLCFYS. Residues 45–65 form a helical membrane-spanning segment; it reads LLLPITLPVYVFFHLWTWMGL. Over 66–71 the chain is Cytoplasmic; the sequence is KLFRHN.

Component of the glycosylphosphatidylinositol-N-acetylglucosaminyltransferase (GPI-GnT) complex composed at least by PIGA, PIGC, PIGH, PIGP, PIGQ, PIGY and DPM2.

It localises to the endoplasmic reticulum membrane. Its pathway is glycolipid biosynthesis; glycosylphosphatidylinositol-anchor biosynthesis. Functionally, part of the glycosylphosphatidylinositol-N-acetylglucosaminyltransferase (GPI-GnT) complex that catalyzes the transfer of N-acetylglucosamine from UDP-N-acetylglucosamine to phosphatidylinositol and participates in the first step of GPI biosynthesis. May act by regulating the catalytic subunit PIGA. The protein is Phosphatidylinositol N-acetylglucosaminyltransferase subunit Y of Xenopus tropicalis (Western clawed frog).